The primary structure comprises 378 residues: Putative glutamate--cysteine ligase 2 (378 aa).

Belongs to the glutamate--cysteine ligase type 2 family. YbdK subfamily.

The enzyme catalyses L-cysteine + L-glutamate + ATP = gamma-L-glutamyl-L-cysteine + ADP + phosphate + H(+). ATP-dependent carboxylate-amine ligase which exhibits weak glutamate--cysteine ligase activity. This chain is Putative glutamate--cysteine ligase 2, found in Salinispora arenicola (strain CNS-205).